The following is a 235-amino-acid chain: tRNA (cytidine-2'-O-)-methyltransferase TrmJ (235 aa).

S-adenosyl-L-methionine-binding positions include 77–79, Gly111, Ile131, and 138–140; these read TSS and PVL.

This sequence belongs to the class IV-like SAM-binding methyltransferase superfamily. RNA methyltransferase TrmH family. In terms of assembly, homodimer.

It is found in the cytoplasm. The enzyme catalyses cytidine(32) in tRNA + S-adenosyl-L-methionine = 2'-O-methylcytidine(32) in tRNA + S-adenosyl-L-homocysteine + H(+). Its function is as follows. Catalyzes the formation of 2'O-methylated cytidine (Cm32) at position 32 in tRNA. Is specific for cytidine. This chain is tRNA (cytidine-2'-O-)-methyltransferase TrmJ, found in Sulfolobus acidocaldarius (strain ATCC 33909 / DSM 639 / JCM 8929 / NBRC 15157 / NCIMB 11770).